A 156-amino-acid chain; its full sequence is Phosphopantetheine adenylyltransferase (156 aa).

Residue Thr10 coordinates substrate. Residues 10–11 (TF) and His18 contribute to the ATP site. Substrate contacts are provided by Lys42, Leu74, and Arg88. Residues 89–91 (GIR), Glu99, and 124–130 (WAFISSS) contribute to the ATP site.

The protein belongs to the bacterial CoaD family. Homohexamer. Mg(2+) serves as cofactor.

It localises to the cytoplasm. It catalyses the reaction (R)-4'-phosphopantetheine + ATP + H(+) = 3'-dephospho-CoA + diphosphate. Its pathway is cofactor biosynthesis; coenzyme A biosynthesis; CoA from (R)-pantothenate: step 4/5. Its function is as follows. Reversibly transfers an adenylyl group from ATP to 4'-phosphopantetheine, yielding dephospho-CoA (dPCoA) and pyrophosphate. This Hamiltonella defensa subsp. Acyrthosiphon pisum (strain 5AT) protein is Phosphopantetheine adenylyltransferase.